The sequence spans 265 residues: Undecaprenyl-diphosphatase (265 aa).

7 consecutive transmembrane segments (helical) span residues 42–62 (ATTFEVAIQLGAILAVVVLYW), 82–102 (GIMLLLLTSLPASVLGLAAHS), 108–128 (LFTPSTVAIALAVGAIFMLLV), 143–163 (MSPALALGIGCFQCLALWPGF), 181–201 (GLAAEYSFIAAVPIMFAATGY), 221–241 (GFVVSFLSAWAAVKLFIALVG), and 248–264 (FAWYRLAIAPLVYYFMA).

This sequence belongs to the UppP family.

It is found in the cell inner membrane. It catalyses the reaction di-trans,octa-cis-undecaprenyl diphosphate + H2O = di-trans,octa-cis-undecaprenyl phosphate + phosphate + H(+). In terms of biological role, catalyzes the dephosphorylation of undecaprenyl diphosphate (UPP). Confers resistance to bacitracin. The sequence is that of Undecaprenyl-diphosphatase from Nitratidesulfovibrio vulgaris (strain ATCC 29579 / DSM 644 / CCUG 34227 / NCIMB 8303 / VKM B-1760 / Hildenborough) (Desulfovibrio vulgaris).